Here is a 144-residue protein sequence, read N- to C-terminus: Testis-specific protein TSX (144 aa).

Disordered stretches follow at residues 1 to 21 (MSEK…DLPE), 69 to 99 (EDRV…RDID), and 120 to 144 (FTDQ…NPTD). Residues 75 to 90 (TDDEDTCQAGCTEDDE) show a composition bias toward acidic residues.

Testis.

Its function is as follows. May have an RNA/DNA binding role. The chain is Testis-specific protein TSX (Tsx) from Mus musculus (Mouse).